Here is a 175-residue protein sequence, read N- to C-terminus: Thioredoxin M-type, chloroplastic (175 aa).

The transit peptide at 1-62 (MALETCLRGW…ARRPSRFVCK (62 aa)) directs the protein to the chloroplast. One can recognise a Thioredoxin domain in the interval 63–174 (CKNVVDEVIV…LCTIIDKYIG (112 aa)). Residues cysteine 98 and cysteine 101 are joined by a disulfide bond.

The protein belongs to the thioredoxin family. Plant M-type subfamily. As to quaternary structure, forms a complex with heterodimeric ferredoxin-thioredoxin reductase (FTR) and ferredoxin.

The protein localises to the plastid. It localises to the chloroplast. In terms of biological role, participates in various redox reactions through the reversible oxidation of the active center dithiol to a disulfide. The M form is known to activate NADP-malate dehydrogenase. The chain is Thioredoxin M-type, chloroplastic from Triticum aestivum (Wheat).